We begin with the raw amino-acid sequence, 120 residues long: Glutamate--tRNA ligase (120 aa).

This sequence belongs to the class-I aminoacyl-tRNA synthetase family. Glutamate--tRNA ligase type 1 subfamily. In terms of assembly, monomer.

The protein resides in the cytoplasm. It catalyses the reaction tRNA(Glu) + L-glutamate + ATP = L-glutamyl-tRNA(Glu) + AMP + diphosphate. Catalyzes the attachment of glutamate to tRNA(Glu) in a two-step reaction: glutamate is first activated by ATP to form Glu-AMP and then transferred to the acceptor end of tRNA(Glu). In Staphylococcus xylosus, this protein is Glutamate--tRNA ligase (gltX).